A 114-amino-acid polypeptide reads, in one-letter code: T cell receptor beta variable 4-1 (114 aa).

The first 21 residues, 1-21 (MGCRLLCCAVLCLLGAVPIDT), serve as a signal peptide directing secretion. The 93-residue stretch at 22-114 (EVTQTPKHLV…SALYLCASSQ (93 aa)) folds into the Ig-like domain. A disulfide bond links Cys42 and Cys110. Residues Asn76 and Asn89 are each glycosylated (N-linked (GlcNAc...) asparagine).

Alpha-beta TR is a heterodimer composed of an alpha and beta chain; disulfide-linked. The alpha-beta TR is associated with the transmembrane signaling CD3 coreceptor proteins to form the TR-CD3 (TcR or TCR). The assembly of alpha-beta TR heterodimers with CD3 occurs in the endoplasmic reticulum where a single alpha-beta TR heterodimer associates with one CD3D-CD3E heterodimer, one CD3G-CD3E heterodimer and one CD247 homodimer forming a stable octameric structure. CD3D-CD3E and CD3G-CD3E heterodimers preferentially associate with TR alpha and TR beta chains, respectively. The association of the CD247 homodimer is the last step of TcR assembly in the endoplasmic reticulum and is required for transport to the cell surface.

It is found in the cell membrane. V region of the variable domain of T cell receptor (TR) beta chain that participates in the antigen recognition. Alpha-beta T cell receptors are antigen specific receptors which are essential to the immune response and are present on the cell surface of T lymphocytes. Recognize peptide-major histocompatibility (MH) (pMH) complexes that are displayed by antigen presenting cells (APC), a prerequisite for efficient T cell adaptive immunity against pathogens. Binding of alpha-beta TR to pMH complex initiates TR-CD3 clustering on the cell surface and intracellular activation of LCK that phosphorylates the ITAM motifs of CD3G, CD3D, CD3E and CD247 enabling the recruitment of ZAP70. In turn ZAP70 phosphorylates LAT, which recruits numerous signaling molecules to form the LAT signalosome. The LAT signalosome propagates signal branching to three major signaling pathways, the calcium, the mitogen-activated protein kinase (MAPK) kinase and the nuclear factor NF-kappa-B (NF-kB) pathways, leading to the mobilization of transcription factors that are critical for gene expression and essential for T cell growth and differentiation. The T cell repertoire is generated in the thymus, by V-(D)-J rearrangement. This repertoire is then shaped by intrathymic selection events to generate a peripheral T cell pool of self-MH restricted, non-autoaggressive T cells. Post-thymic interaction of alpha-beta TR with the pMH complexes shapes TR structural and functional avidity. The protein is T cell receptor beta variable 4-1 of Homo sapiens (Human).